Reading from the N-terminus, the 442-residue chain is Lysosomal dipeptide transporter MFSD1 (442 aa).

A Dileucine internalization motif motif is present at residues 8–9 (LL). 10 helical membrane passes run 38–58 (LLVL…YDNP), 85–105 (TVIF…GALV), 107–127 (AFWL…SLAV), 187–207 (LLIG…LAYL), 238–258 (LWLI…FIGL), 276–296 (AINS…GILV), 303–323 (IIWV…LAFT), 333–353 (LLGV…AFVV), 364–384 (FMQS…GMIL), and 390–410 (LFLE…VVML).

The protein belongs to the major facilitator superfamily. As to quaternary structure, homodimer. Interacts with lysosomal protein GLMP (via lumenal domain); the interaction starts while both proteins are still in the endoplasmic reticulum and is required for stabilization of MFSD1 in lysosomes but has no direct effect on its targeting to lysosomes or transporter activity.

The protein localises to the lysosome membrane. The enzyme catalyses L-alpha-aminoacyl-L-arginine(out) = L-alpha-aminoacyl-L-arginine(in). It catalyses the reaction L-arginyl-L-alpha-amino acid(out) = L-arginyl-L-alpha-amino acid(in). The catalysed reaction is L-arginyl-glycine(out) = L-arginyl-glycine(in). It carries out the reaction L-alpha-aminoacyl-L-lysine(out) = L-alpha-aminoacyl-L-lysine(in). The enzyme catalyses L-aspartyl-L-lysine(out) = L-aspartyl-L-lysine(in). It catalyses the reaction L-alanyl-L-lysine(out) = L-alanyl-L-lysine(in). The catalysed reaction is L-lysyl-L-alpha-amino acid(out) = L-lysyl-L-alpha-amino acid(in). It carries out the reaction L-lysyl-L-alanine(out) = L-lysyl-L-alanine(in). The enzyme catalyses L-lysyl-L-lysine(out) = L-lysyl-L-lysine(in). It catalyses the reaction L-lysyl-glycine(out) = L-lysyl-glycine(in). The catalysed reaction is L-alpha-aminoacyl-L-histidine(out) = L-alpha-aminoacyl-L-histidine(in). It carries out the reaction L-histidyl-L-alpha-amino acid(out) = L-histidyl-L-alpha-amino acid(in). The enzyme catalyses L-histidyl-glycine(out) = L-histidyl-glycine(in). In terms of biological role, lysosomal dipeptide uniporter that selectively exports lysine, arginine or histidine-containing dipeptides with a net positive charge from the lysosome lumen into the cytosol. Could play a role in a specific type of protein O-glycosylation indirectly regulating macrophages migration and tissue invasion. Also essential for liver homeostasis. The chain is Lysosomal dipeptide transporter MFSD1 from Gallus gallus (Chicken).